Consider the following 300-residue polypeptide: Acetylglutamate kinase (300 aa).

Substrate is bound by residues 68–69 (GG), arginine 90, and asparagine 194.

It belongs to the acetylglutamate kinase family. ArgB subfamily.

It localises to the cytoplasm. The enzyme catalyses N-acetyl-L-glutamate + ATP = N-acetyl-L-glutamyl 5-phosphate + ADP. Its pathway is amino-acid biosynthesis; L-arginine biosynthesis; N(2)-acetyl-L-ornithine from L-glutamate: step 2/4. Its function is as follows. Catalyzes the ATP-dependent phosphorylation of N-acetyl-L-glutamate. The sequence is that of Acetylglutamate kinase from Methanocella arvoryzae (strain DSM 22066 / NBRC 105507 / MRE50).